Consider the following 163-residue polypeptide: Nodulin-13 (163 aa).

Kinetin contacts are provided by Gln-68 and Tyr-82. The N(6)-dimethylallyladenine site is built by Gln-68 and Tyr-82. Trans-zeatin contacts are provided by Gln-68, Tyr-82, and Tyr-133.

This sequence belongs to the BetVI family. Homodimer. In terms of tissue distribution, expressed in nodules, but not in leaves, stems, flowers and roots. Specifically located in the nodule cortex.

Functionally, may be involved in nodule organogenesis rather in the processes related to nitrogen fixation or interactions with the bacteria. May regulate nodulation by controlling the levels of freely available cytokinins. The chain is Nodulin-13 (N13) from Medicago truncatula (Barrel medic).